We begin with the raw amino-acid sequence, 291 residues long: Deaminated glutathione amidase (291 aa).

The CN hydrolase domain occupies 13 to 268; it reads KRIGLGQITS…NDIAFVDIDL (256 aa). Glutamate 52 functions as the Proton acceptor in the catalytic mechanism. Lysine 130 acts as the Proton donor in catalysis. Catalysis depends on cysteine 172, which acts as the Nucleophile.

The protein belongs to the carbon-nitrogen hydrolase superfamily. NIT1/NIT2 family.

The catalysed reaction is N-(4-oxoglutaryl)-L-cysteinylglycine + H2O = L-cysteinylglycine + 2-oxoglutarate. In terms of biological role, catalyzes the hydrolysis of the amide bond in N-(4-oxoglutarate)-L-cysteinylglycine (deaminated glutathione), a metabolite repair reaction to dispose of the harmful deaminated glutathione. The chain is Deaminated glutathione amidase (nit1-1) from Dictyostelium discoideum (Social amoeba).